Here is an 816-residue protein sequence, read N- to C-terminus: Pentatricopeptide repeat-containing protein At5g12100, mitochondrial (816 aa).

A mitochondrion-targeting transit peptide spans 1–39; that stretch reads MVTRLRLVSRSSRYATVKFTDSVSACSCRRLFSASTDPE. A disordered region spans residues 34–57; sequence ASTDPEPESQPEQAPPTNPVTGDE. 20 PPR repeats span residues 108–142, 143–177, 178–212, 213–247, 248–282, 283–317, 318–352, 353–387, 388–422, 423–457, 458–492, 493–527, 528–562, 563–597, 598–632, 633–662, 664–698, 699–733, 734–768, and 769–803; these read HDFS…GIYP, SSDS…DFRP, SKFM…RIYP, SVFI…RLLP, SLIT…HIEP, SLIT…GFVP, DAFT…GVKM, NAYT…GLVP, NEVI…GMKP, DHLA…GVSP, SVET…GTMP, NVVS…GVSP, KVRI…GIEL, NLVT…GLKP, DVFT…GIKP, TLKT…MSLK, DLLV…SIGL, DKTT…EMEP, EADT…GFLL, and DVCI…MLGD.

The protein belongs to the PPR family. P subfamily.

Its subcellular location is the mitochondrion. This Arabidopsis thaliana (Mouse-ear cress) protein is Pentatricopeptide repeat-containing protein At5g12100, mitochondrial.